The sequence spans 326 residues: Interleukin-1-binding protein (326 aa).

An N-terminal signal peptide occupies residues 1–18 (MSILPVIFLSIFFYSSFV). Ig-like domains are found at residues 24 to 115 (PECI…LNLT), 122 to 212 (SNID…RIVK), and 221 to 322 (PSTM…KTVT). Residues C48 and C99 are joined by a disulfide bond. Residues N80, N103, and N113 are each glycosylated (N-linked (GlcNAc...) asparagine; by host). A disulfide bridge connects residues C143 and C194. N-linked (GlcNAc...) asparagine; by host glycans are attached at residues N206 and N237. Residues C242 and C309 are joined by a disulfide bond.

Belongs to the interleukin-1 receptor family. Interacts with mouse Il1b.

It localises to the secreted. May reduce the host inflammatory response by interacting with inteleukin-1 beta (Il1b) and thus decreasing the association between IL1B and its cellular receptor. The sequence is that of Interleukin-1-binding protein (OPG201) from Vaccinia virus (strain Ankara) (VACV).